Reading from the N-terminus, the 594-residue chain is A-type ATP synthase subunit A (594 aa).

236 to 243 (GPFGSGKT) is an ATP binding site.

This sequence belongs to the ATPase alpha/beta chains family. In terms of assembly, has multiple subunits with at least A(3), B(3), C, D, E, F, H, I and proteolipid K(x).

It is found in the cell membrane. It catalyses the reaction ATP + H2O + 4 H(+)(in) = ADP + phosphate + 5 H(+)(out). Its function is as follows. Component of the A-type ATP synthase that produces ATP from ADP in the presence of a proton gradient across the membrane. The A chain is the catalytic subunit. In Pyrobaculum neutrophilum (strain DSM 2338 / JCM 9278 / NBRC 100436 / V24Sta) (Thermoproteus neutrophilus), this protein is A-type ATP synthase subunit A.